The following is a 299-amino-acid chain: Probable arylamine N-acetyltransferase 2 (299 aa).

Residue C75 is the Acyl-thioester intermediate of the active site. Catalysis depends on residues H115 and D130.

This sequence belongs to the arylamine N-acetyltransferase family.

It carries out the reaction an arylamine + acetyl-CoA = an N-acetylarylamine + CoA. The sequence is that of Probable arylamine N-acetyltransferase 2 from Dictyostelium discoideum (Social amoeba).